The following is a 135-amino-acid chain: Protein PsiE homolog (135 aa).

A run of 4 helical transmembrane segments spans residues 13–33, 54–74, 82–102, and 107–127; these read VLQW…VIFL, YMLV…ALIV, HFPL…LIIV, and PNDT…LYLA.

It belongs to the PsiE family.

It is found in the cell inner membrane. The chain is Protein PsiE homolog from Edwardsiella ictaluri (strain 93-146).